Here is a 469-residue protein sequence, read N- to C-terminus: UDP-N-acetylmuramate--L-alanine ligase (469 aa).

112–118 contributes to the ATP binding site; that stretch reads GTHGKTT.

This sequence belongs to the MurCDEF family.

Its subcellular location is the cytoplasm. It carries out the reaction UDP-N-acetyl-alpha-D-muramate + L-alanine + ATP = UDP-N-acetyl-alpha-D-muramoyl-L-alanine + ADP + phosphate + H(+). The protein operates within cell wall biogenesis; peptidoglycan biosynthesis. Cell wall formation. In Herminiimonas arsenicoxydans, this protein is UDP-N-acetylmuramate--L-alanine ligase.